A 291-amino-acid chain; its full sequence is N-acetylmannosamine kinase (291 aa).

ATP contacts are provided by residues 5-12 (AIDIGGTK) and 132-139 (GVGGGVVC). Zn(2+)-binding residues include histidine 156, cysteine 166, cysteine 168, and cysteine 173.

This sequence belongs to the ROK (NagC/XylR) family. NanK subfamily. Homodimer.

The catalysed reaction is an N-acyl-D-mannosamine + ATP = an N-acyl-D-mannosamine 6-phosphate + ADP + H(+). The protein operates within amino-sugar metabolism; N-acetylneuraminate degradation; D-fructose 6-phosphate from N-acetylneuraminate: step 2/5. In terms of biological role, catalyzes the phosphorylation of N-acetylmannosamine (ManNAc) to ManNAc-6-P. The polypeptide is N-acetylmannosamine kinase (Salmonella gallinarum (strain 287/91 / NCTC 13346)).